The primary structure comprises 209 residues: uncharacterized protein (209 aa).

A run of 3 helical transmembrane segments spans residues 26 to 48 (LRYF…GLAV), 147 to 169 (AYLV…PFLM), and 179 to 196 (IVAA…VYLL).

The protein resides in the cell membrane. This is an uncharacterized protein from Archaeoglobus fulgidus (strain ATCC 49558 / DSM 4304 / JCM 9628 / NBRC 100126 / VC-16).